We begin with the raw amino-acid sequence, 786 residues long: Rho GTPase-activating protein 10 (786 aa).

The BAR domain occupies 7–262 (EFSDCYLDSP…IRQNPKDHKR (256 aa)). A PH domain is found at 265–372 (QFTAEGYLYV…WLEALGGKEA (108 aa)). In terms of domain architecture, Rho-GAP spans 389–574 (AQLDKMGFTI…ILIENHEKIF (186 aa)). Disordered regions lie at residues 576–608 (TPPD…QRTK) and 621–727 (EDGD…PPES). Residues 599 to 608 (QSKRQGQRTK) show a composition bias toward basic residues. The segment covering 634-651 (PTSSLDSLSSPSPVTTAV) has biased composition (low complexity). The segment covering 676 to 688 (IPGQTRSSMVQWL) has biased composition (polar residues). The span at 689-712 (NPQSPTTTSSNSAVTPLSPGSSPF) shows a compositional bias: low complexity. Residues 728–786 (IRSRKARAVYPCEAEHSSELSFEIGAIFEDVQTSREPGWLEGTLNGKRGLIPQNYVKLL) enclose the SH3 domain.

In terms of assembly, interacts with PKN3. Interacts with caspase-activated PAK2 proteolytic fragment PAK-2p34; the interaction does not affect GRAF2/ARHGAP10 GTPase activation activity towards RHOA and CDC42. Interacts via its SH3 domain with PTK2/FAK1. Interacts with PTK2B/PYK2; the interaction negatively regulates GRAF2/ARHGAP10 GTPase-activating activity. Interacts with MICAL1 and WDR44; complex formation might transit from GRAF2/ARHGAP10-MICAL1 to GRAF2/ARHGAP10-WDR44 complexes. Phosphorylated. Phosphorylated in vitro by constitutive active PKN3. High levels of expression in heart and skeletal muscle.

It localises to the cytoplasm. It is found in the perinuclear region. The protein resides in the cell membrane. The protein localises to the endosome membrane. GTPase-activating protein that catalyzes the conversion of active GTP-bound Rho GTPases to their inactive GDP-bound form, thus suppressing various Rho GTPase-mediated cellular processes. Also converts Cdc42 to an inactive GDP-bound state. Essential for PTKB2 regulation of cytoskeletal organization via Rho family GTPases. Inhibits PAK2 proteolytic fragment PAK-2p34 kinase activity and changes its localization from the nucleus to the perinuclear region. Stabilizes PAK-2p34 thereby increasing stimulation of cell death. Associates with MICAL1 on the endosomal membrane to promote Rab8-Rab10-dependent tubule extension. After dissociation with MICAL1, recruits WDR44 which connects the endoplasmic reticulum (ER) with the endosomal tubule, thereby participating in the export of a subset of neosynthesized proteins. The polypeptide is Rho GTPase-activating protein 10 (ARHGAP10) (Homo sapiens (Human)).